We begin with the raw amino-acid sequence, 433 residues long: 3-phosphoshikimate 1-carboxyvinyltransferase (433 aa).

The 3-phosphoshikimate site is built by lysine 23, serine 24, and arginine 28. Lysine 23 provides a ligand contact to phosphoenolpyruvate. Residues glycine 95 and arginine 123 each contribute to the phosphoenolpyruvate site. The 3-phosphoshikimate site is built by serine 167, glutamine 169, aspartate 317, and lysine 344. Position 169 (glutamine 169) interacts with phosphoenolpyruvate. The Proton acceptor role is filled by aspartate 317. 2 residues coordinate phosphoenolpyruvate: arginine 348 and arginine 390.

Belongs to the EPSP synthase family. As to quaternary structure, monomer.

Its subcellular location is the cytoplasm. The catalysed reaction is 3-phosphoshikimate + phosphoenolpyruvate = 5-O-(1-carboxyvinyl)-3-phosphoshikimate + phosphate. Its pathway is metabolic intermediate biosynthesis; chorismate biosynthesis; chorismate from D-erythrose 4-phosphate and phosphoenolpyruvate: step 6/7. In terms of biological role, catalyzes the transfer of the enolpyruvyl moiety of phosphoenolpyruvate (PEP) to the 5-hydroxyl of shikimate-3-phosphate (S3P) to produce enolpyruvyl shikimate-3-phosphate and inorganic phosphate. This is 3-phosphoshikimate 1-carboxyvinyltransferase from Staphylococcus epidermidis (strain ATCC 12228 / FDA PCI 1200).